Consider the following 205-residue polypeptide: Cytochrome c biogenesis ATP-binding export protein CcmA (205 aa).

Positions 2-204 (LEVSNLTAIR…SPKLRKIKLG (203 aa)) constitute an ABC transporter domain. 34 to 41 (GRNGTGKT) is an ATP binding site.

Belongs to the ABC transporter superfamily. CcmA exporter (TC 3.A.1.107) family. As to quaternary structure, the complex is composed of two ATP-binding proteins (CcmA) and two transmembrane proteins (CcmB).

The protein resides in the cell inner membrane. It carries out the reaction heme b(in) + ATP + H2O = heme b(out) + ADP + phosphate + H(+). Part of the ABC transporter complex CcmAB involved in the biogenesis of c-type cytochromes; once thought to export heme, this seems not to be the case, but its exact role is uncertain. Responsible for energy coupling to the transport system. The sequence is that of Cytochrome c biogenesis ATP-binding export protein CcmA from Vibrio parahaemolyticus serotype O3:K6 (strain RIMD 2210633).